Here is a 293-residue protein sequence, read N- to C-terminus: Signal recognition particle receptor FtsY (293 aa).

GTP-binding positions include 93 to 100 (GVNGAGKT), 175 to 179 (DTAGR), and 239 to 242 (TKLD).

It belongs to the GTP-binding SRP family. FtsY subfamily. As to quaternary structure, part of the signal recognition particle protein translocation system, which is composed of SRP and FtsY. SRP is a ribonucleoprotein composed of Ffh and a 4.5S RNA molecule.

Its subcellular location is the cell inner membrane. It is found in the cytoplasm. It catalyses the reaction GTP + H2O = GDP + phosphate + H(+). Its function is as follows. Involved in targeting and insertion of nascent membrane proteins into the cytoplasmic membrane. Acts as a receptor for the complex formed by the signal recognition particle (SRP) and the ribosome-nascent chain (RNC). Interaction with SRP-RNC leads to the transfer of the RNC complex to the Sec translocase for insertion into the membrane, the hydrolysis of GTP by both Ffh and FtsY, and the dissociation of the SRP-FtsY complex into the individual components. This Helicobacter pylori (strain J99 / ATCC 700824) (Campylobacter pylori J99) protein is Signal recognition particle receptor FtsY.